The chain runs to 883 residues: DNA double-strand break repair Rad50 ATPase (883 aa).

Residues lysine 12, 32–38 (NGSGKSS), and glutamine 137 each bind ATP. Residues 244 to 283 (ERYEESRTALADVEETIADVREAVAEAERERETLADRVSD) adopt a coiled-coil conformation. Disordered regions lie at residues 271 to 290 (ERER…RASD) and 305 to 326 (DDPD…REAV). The span at 313–326 (SAERDAVADQREAV) shows a compositional bias: basic and acidic residues. Coiled coils occupy residues 336-389 (AVSR…IEAL) and 414-452 (LDDA…LDEG). In terms of domain architecture, Zinc-hook spans 407–506 (FGAAEAFLDD…RVDRGESLVA (100 aa)). Zn(2+) contacts are provided by cysteine 454 and cysteine 457. Residues 508 to 565 (EDRVDDLEQQRERAVERRDEQADIADAKRDQAAEKRDRAADLDAEAEDARADAAAKRD) are disordered. Coiled coils occupy residues 571-604 (RETL…AADA) and 668-720 (KLQA…VTAL).

The protein belongs to the SMC family. RAD50 subfamily. Homodimer. Forms a heterotetramer composed of two Mre11 subunits and two Rad50 subunits. The cofactor is Zn(2+).

Functionally, part of the Rad50/Mre11 complex, which is involved in the early steps of DNA double-strand break (DSB) repair. Rad50 controls the balance between DNA end bridging and DNA resection via ATP-dependent structural rearrangements of the Rad50/Mre11 complex. The chain is DNA double-strand break repair Rad50 ATPase from Halobacterium salinarum (strain ATCC 700922 / JCM 11081 / NRC-1) (Halobacterium halobium).